The following is a 530-amino-acid chain: NADH-quinone oxidoreductase subunit C/D (530 aa).

The interval 1-144 is NADH dehydrogenase I subunit C; the sequence is MEEIKYIEPA…NPLRMDNEET (144 aa). Positions 171–530 are NADH dehydrogenase I subunit D; it reads EYVVNIGPQH…LDYVVPDIDR (360 aa).

The protein in the N-terminal section; belongs to the complex I 30 kDa subunit family. It in the C-terminal section; belongs to the complex I 49 kDa subunit family. NDH-1 is composed of 13 different subunits. Subunits NuoB, CD, E, F, and G constitute the peripheral sector of the complex.

Its subcellular location is the cell inner membrane. The catalysed reaction is a quinone + NADH + 5 H(+)(in) = a quinol + NAD(+) + 4 H(+)(out). Its function is as follows. NDH-1 shuttles electrons from NADH, via FMN and iron-sulfur (Fe-S) centers, to quinones in the respiratory chain. The immediate electron acceptor for the enzyme in this species is believed to be a menaquinone. Couples the redox reaction to proton translocation (for every two electrons transferred, four hydrogen ions are translocated across the cytoplasmic membrane), and thus conserves the redox energy in a proton gradient. The sequence is that of NADH-quinone oxidoreductase subunit C/D from Bacteroides fragilis (strain ATCC 25285 / DSM 2151 / CCUG 4856 / JCM 11019 / LMG 10263 / NCTC 9343 / Onslow / VPI 2553 / EN-2).